The chain runs to 24 residues: Ascaphin-4 (24 aa).

In terms of tissue distribution, expressed by the skin glands.

The protein resides in the secreted. Its function is as follows. Antimicrobial peptide that shows higher potency against Gram-negative bacteria than against Gram-positive bacteria. Has a very week hemolytic activity. The protein is Ascaphin-4 of Ascaphus truei (Coastal tailed frog).